Reading from the N-terminus, the 511-residue chain is Voltage-gated potassium channel KCNC1 (511 aa).

Over 1 to 190 (MGQGDESERI…EDPYSSRYAR (190 aa)) the chain is Cytoplasmic. At S44 the chain carries Phosphoserine. H77, C83, C104, and C105 together coordinate Zn(2+). Residues 121–147 (SFGGAPLDNSADDADADGPGDSGDGED) form a disordered region. S130, S142, S158, and S160 each carry phosphoserine. Residues 130–147 (SADDADADGPGDSGDGED) are compositionally biased toward acidic residues. A helical transmembrane segment spans residues 191 to 209 (YVAFASLFFILVSITTFCL). N220 and N229 each carry an N-linked (GlcNAc...) asparagine glycan. The chain crosses the membrane as a helical span at residues 248–267 (IEGVCVVWFTFEFLMRVVFC). The Cytoplasmic portion of the chain corresponds to 268–276 (PNKVEFIKN). The chain crosses the membrane as a helical span at residues 277-295 (SLNIIDFVAILPFYLEVGL). Residues 309–331 (FLRVVRFVRILRIFKLTRHFVGL) form a helical; Voltage-sensor membrane-spanning segment. Residues 332–344 (RVLGHTLRASTNE) lie on the Cytoplasmic side of the membrane. The helical transmembrane segment at 345–366 (FLLLIIFLALGVLIFATMIYYA) threads the bilayer. Residues T400, L401, G402, and Y403 each contribute to the K(+) site. The Selectivity filter motif lies at 400 to 405 (TLGYGD). The helical transmembrane segment at 415 to 436 (LVGALCALAGVLTIAMPVPVIV) threads the bilayer. Residues 437-511 (NNFGMYYSLA…GRKPLRGMSI (75 aa)) lie on the Cytoplasmic side of the membrane. The residue at position 474 (S474) is a Phosphoserine. Residue T483 is modified to Phosphothreonine.

It belongs to the potassium channel family. C (Shaw) (TC 1.A.1.2) subfamily. Kv3.1/KCNC1 sub-subfamily. In terms of assembly, homotetramer. Homomultimer. Heteromultimer with KCNG3, KCNG4 and KCNV2. Heteromultimer with KCNC2. Heterotetramer with KCNC3. Interacts with the ancillary subunits KCNE1 and KCNE2; the interaction modulates channel activity. Post-translationally, N-glycosylated; contains sialylated glycans. Detected in cerebellum. Detected in brain (at protein level). Detected in brain.

It localises to the cell membrane. The protein localises to the cell projection. Its subcellular location is the axon. The protein resides in the presynaptic cell membrane. It carries out the reaction K(+)(in) = K(+)(out). Its function is as follows. Voltage-gated potassium channel that opens in response to the voltage difference across the membrane and through which potassium ions pass in accordance with their electrochemical gradient. The mechanism is time-dependent and inactivation is slow. Plays an important role in the rapid repolarization of fast-firing brain neurons. Can form functional homotetrameric channels and heterotetrameric channels that contain variable proportions of KCNC2, and possibly other family members as well. Contributes to fire sustained trains of very brief action potentials at high frequency in pallidal neurons. The polypeptide is Voltage-gated potassium channel KCNC1 (Mus musculus (Mouse)).